We begin with the raw amino-acid sequence, 141 residues long: MAKKVVAVIKLALQAGKANPAPPVGPALGQHGVNIMMFCKEYNARTQDKAGLVIPVEISVFEDRSFTFITKTPPASVLITKAAGIEKGSGDSAKGSVGSISRAQLEEIAKTKLPDLNCSSVDSAMRIIEGTARNMGVAVSD.

This sequence belongs to the universal ribosomal protein uL11 family. In terms of assembly, part of the ribosomal stalk of the 50S ribosomal subunit. Interacts with L10 and the large rRNA to form the base of the stalk. L10 forms an elongated spine to which L12 dimers bind in a sequential fashion forming a multimeric L10(L12)X complex. One or more lysine residues are methylated.

Its function is as follows. Forms part of the ribosomal stalk which helps the ribosome interact with GTP-bound translation factors. In Synechococcus sp. (strain CC9902), this protein is Large ribosomal subunit protein uL11.